Here is a 470-residue protein sequence, read N- to C-terminus: Nuclear receptor ROR-beta (470 aa).

A DNA-binding region (nuclear receptor) is located at residues 18–93 (VIPCKICGDK…LGMSRDAVKF (76 aa)). 2 NR C4-type zinc fingers span residues 21–41 (CKIC…CEGC) and 57–81 (CPRQ…LQKC). Residues 104–117 (LYAEVQKHQQRLQE) are compositionally biased toward basic and acidic residues. The disordered stretch occupies residues 104–127 (LYAEVQKHQQRLQEQRQQQSGEAE). Residues 222-460 (EIDRIAQNII…TLFPPLYKEL (239 aa)) enclose the NR LBD domain. The AF-2 motif lies at 456–461 (LYKELF).

This sequence belongs to the nuclear hormone receptor family. NR1 subfamily. Monomer. Interacts with CRX.

The protein resides in the nucleus. The protein localises to the nucleoplasm. Nuclear receptor that binds DNA as a monomer to ROR response elements (RORE) containing a single core motif half-site 5'-AGGTCA-3' preceded by a short A-T-rich sequence. Considered to have intrinsic transcriptional activity, have some natural ligands such as all-trans retinoic acid (ATRA) and other retinoids which act as inverse agonists repressing the transcriptional activity. Required for normal postnatal development of rod and cone photoreceptor cells. Modulates rod photoreceptors differentiation at least by inducing the transcription factor NRL-mediated pathway. In cone photoreceptor cells, regulates transcription of OPN1SW. Involved in the regulation of the period length and stability of the circadian rhythm. May control cytoarchitectural patterning of neocortical neurons during development. May act in a dose-dependent manner to regulate barrel formation upon innervation of layer IV neurons by thalamocortical axons. May play a role in the suppression of osteoblastic differentiation through the inhibition of RUNX2 transcriptional activity. Functionally, isoform 1 is critical for hindlimb motor control and for the differentiation of amacrine and horizontal cells in the retina. Regulates the expression of PTF1A synergistically with FOXN4. The polypeptide is Nuclear receptor ROR-beta (RORB) (Homo sapiens (Human)).